Consider the following 435-residue polypeptide: Adenylosuccinate synthetase (435 aa).

GTP contacts are provided by residues 11–17 and 39–41; these read GDEGKGK and GHT. Aspartate 12 (proton acceptor) is an active-site residue. Positions 12 and 39 each coordinate Mg(2+). Residues 12 to 15, 37 to 40, threonine 128, arginine 142, glutamine 223, threonine 238, and arginine 302 each bind IMP; these read DEGK and NAGH. The Proton donor role is filled by histidine 40. Residue 298–304 coordinates substrate; that stretch reads SVTGRPR. GTP contacts are provided by residues arginine 304, 330 to 332, and 412 to 414; these read KLD and STG.

The protein belongs to the adenylosuccinate synthetase family. As to quaternary structure, homodimer. Requires Mg(2+) as cofactor.

The protein localises to the cytoplasm. The enzyme catalyses IMP + L-aspartate + GTP = N(6)-(1,2-dicarboxyethyl)-AMP + GDP + phosphate + 2 H(+). The protein operates within purine metabolism; AMP biosynthesis via de novo pathway; AMP from IMP: step 1/2. Functionally, plays an important role in the de novo pathway of purine nucleotide biosynthesis. Catalyzes the first committed step in the biosynthesis of AMP from IMP. This chain is Adenylosuccinate synthetase, found in Coxiella burnetii (strain Dugway 5J108-111).